The primary structure comprises 418 residues: Mitochondrial outer membrane protein SLC25A46 (418 aa).

Phosphoserine is present on residues Ser32 and Ser35. A Phosphothreonine modification is found at Thr45. The interval 46-96 (PPDIPGSRNLHWGEKSPSYGVPSAPPTLEGSAEEPFPGGGEGPRPGPSSEQ) is disordered. One copy of the Solcar 1 repeat lies at 96-187 (QLNRFAGFGI…GIISEFTPLP (92 aa)). A run of 6 helical transmembrane segments spans residues 103 to 123 (FGIG…CIVL), 167 to 187 (FIVQ…TPLP), 202 to 222 (HLLL…ASLI), 258 to 278 (LLPL…HYII), 314 to 334 (FPEL…LYPL), and 382 to 402 (VFGF…HATI). One copy of the Solcar 2 repeat lies at 311–413 (DAYFPELIAN…QITKMIYSTL (103 aa)).

The protein belongs to the mitochondrial carrier (TC 2.A.29) family. In terms of assembly, associates with the mitochondrial contact site and cristae organizing system (MICOS) complex. May associate with the endoplasmic reticulum membrane protein complex (EMC).

The protein localises to the mitochondrion outer membrane. Its function is as follows. Transmembrane protein of the mitochondrial outer membrane that controls mitochondrial organization. May regulate the assembly of the MICOS (mitochondrial contact site and cristae organizing system) complex which is essential to the biogenesis and dynamics of mitochondrial cristae, the inwards folds of the inner mitochondrial membrane. Through its interaction with the EMC (endoplasmic reticulum membrane protein complex), could regulate mitochondrial lipid homeostasis and thereby mitochondrial fission. The chain is Mitochondrial outer membrane protein SLC25A46 from Mus musculus (Mouse).